We begin with the raw amino-acid sequence, 238 residues long: ATP synthase subunit O, mitochondrial (238 aa).

The transit peptide at 1–36 directs the protein to the mitochondrion; that stretch reads MANRFRSGISFFKTIAVTDSVSSVRSKSLFPALRTY. Position 90 is a phosphothreonine (Thr90).

The protein belongs to the ATPase delta chain family. F-type ATPases have 2 components, CF(1) - the catalytic core - and CF(0) - the membrane proton channel. CF(1) has five subunits: alpha(3), beta(3), gamma(1), delta(1), epsilon(1). CF(0) has three main subunits: a, b and c.

It localises to the mitochondrion. The protein resides in the mitochondrion inner membrane. In terms of biological role, mitochondrial membrane ATP synthase (F(1)F(0) ATP synthase or Complex V) produces ATP from ADP in the presence of a proton gradient across the membrane which is generated by electron transport complexes of the respiratory chain. F-type ATPases consist of two structural domains, F(1) - containing the extramembraneous catalytic core and F(0) - containing the membrane proton channel, linked together by a central stalk and a peripheral stalk. During catalysis, ATP synthesis in the catalytic domain of F(1) is coupled via a rotary mechanism of the central stalk subunits to proton translocation. Part of the complex F(0) domain and the peripheric stalk, which acts as a stator to hold the catalytic alpha(3)beta(3) subcomplex and subunit a/ATP6 static relative to the rotary elements. The protein is ATP synthase subunit O, mitochondrial of Arabidopsis thaliana (Mouse-ear cress).